The sequence spans 349 residues: RxLR effector protein CRE15 (349 aa).

The N-terminal stretch at 1–33 (MITFKRLSSARWGALLTSIAVLFFLAITKGADA) is a signal peptide. The short motif at 46–62 (RRLRTTTADAYYASEDR) is the RxLR-dEER element.

This sequence belongs to the RxLR effector family. As to quaternary structure, interacts directly with the potato ortholog of vascular highway 1 (VH1)-interacting kinase (VIK), encoding a predicted MEK kinase (MAP3K).

It localises to the secreted. It is found in the host cell membrane. Functionally, effector that promotes P.infestans virulence in Nicotiana benthamiana and potato. Attenuates cell death triggered by the pathogen-associated molecular pattern infestin 1 (INF1), indicating that the effector suppresses pattern-triggered immunity. However, it does not attenuate cell death triggered by a range of resistance proteins, suggesting that it specifically suppresses INF1-triggered cell death (ICD). Targets host MAP3K VIK in order to utilize or promote its ability to negatively regulate immunity. This is RxLR effector protein CRE15 from Phytophthora infestans (strain T30-4) (Potato late blight agent).